The primary structure comprises 316 residues: Elongation factor Ts, mitochondrial (316 aa).

The transit peptide at 1-18 directs the protein to the mitochondrion; the sequence is MFARAPFVRLLSTTSRNL. The disordered stretch occupies residues 245–269; sequence EAAESVKTQEGLRSQEGHDPNADPV.

The protein belongs to the EF-Ts family.

The protein localises to the mitochondrion. Associates with the EF-Tu.GDP complex and induces the exchange of GDP to GTP. It remains bound to the aminoacyl-tRNA.EF-Tu.GTP complex up to the GTP hydrolysis stage on the ribosome. This Caenorhabditis elegans protein is Elongation factor Ts, mitochondrial.